Here is a 999-residue protein sequence, read N- to C-terminus: Desmoglein-3 (999 aa).

The signal sequence occupies residues 1 to 23 (MMGLFPRTTGALAIFVVVILVHG). Positions 24 to 49 (ELRIETKGQYDEEEMTMQQAKRRQKR) are excised as a propeptide. Cadherin domains lie at 50 to 158 (EWVK…PVFS), 159 to 268 (QQIF…PMFR), 269 to 383 (DSQY…GIAF), and 386 to 499 (ASKT…VLEK). Topologically, residues 50 to 615 (EWVKFAKPCR…TRYGRPHSGR (566 aa)) are extracellular. Residues N110 and N180 are each glycosylated (N-linked (GlcNAc...) asparagine). N-linked (GlcNAc...) asparagine glycans are attached at residues N459 and N545. Residues 616–640 (LGPAAIGLLLLGLLLLLLAPLLLLT) traverse the membrane as a helical segment. Residues 641-999 (CDCGAGSTGG…CTEDPCSRLI (359 aa)) lie on the Cytoplasmic side of the membrane. The required for interaction with CTNND1 and localization at cell-cell junctions stretch occupies residues 642 to 714 (DCGAGSTGGV…NTYARGTAVE (73 aa)). Desmoglein repeat repeat units follow at residues 910 to 935 (LSTSGSVQPAVSIPDPLQHGNYLVTE) and 936 to 966 (TYSASGSLVQPSTAGFDPLLTQNVIVTERVI).

As to quaternary structure, homodimer. Part of a complex that contains DSG3, PKP1, YAP1 and YWHAG; the complex is required for localization of DSG3 and YAP1 to the cell membrane in keratinocytes. Interacts with PKP2. Interacts with CTNND1; the interaction facilitates DSG3 localization and retention at cell-cell junctions. Interacts with CDH1; the interaction is required for CDH1 localization to developing adherens junctions. Interacts with RAC1; the interaction is required for DSG3 translocation to cell-cell junctions, organization of cortical F-actin bundles and actin anchoring at cell-cell junctions. Interacts with DSC3; the interaction may limit the interaction of DSC3 with p38MAPK family members and therefore repress p38MAPK signaling activation. In terms of tissue distribution, expressed throughout the basal and spinous layer of the epidermis with weak expression in the granular layer (at protein level). Expressed in skin and mucosa (at protein level). Expressed in the basal layer of the outer root sheath of the telogen hair club, specifically at the cell membrane between the apex of the cells and the surrounding hair club (at protein level). Expression is less abundant between the lateral margins of the outer root sheath basal cells (at protein level). Also expressed in the tongue, tonsil and esophagus.

It is found in the cell membrane. Its subcellular location is the cell junction. The protein localises to the desmosome. It localises to the cytoplasm. The protein resides in the tight junction. Functionally, a component of desmosome cell-cell junctions which are required for positive regulation of cellular adhesion. Required for adherens and desmosome junction assembly in response to mechanical force in keratinocytes. Required for desmosome-mediated cell-cell adhesion of cells surrounding the telogen hair club and the basal layer of the outer root sheath epithelium, consequently is essential for the anchoring of telogen hairs in the hair follicle. Required for the maintenance of the epithelial barrier via promoting desmosome-mediated intercellular attachment of suprabasal epithelium to basal cells. May play a role in the protein stability of the desmosome plaque components DSP, JUP, PKP1, PKP2 and PKP3. Required for YAP1 localization at the plasma membrane in keratinocytes in response to mechanical strain, via the formation of an interaction complex composed of DSG3, PKP1 and YWHAG. May also be involved in the positive regulation of YAP1 target gene transcription and as a result cell proliferation. Positively regulates cellular contractility and cell junction formation via organization of cortical F-actin bundles and anchoring of actin to tight junctions, in conjunction with RAC1. The cytoplasmic pool of DSG3 is required for the localization of CDH1 and CTNNB1 at developing adherens junctions, potentially via modulation of SRC activity. Inhibits keratinocyte migration via suppression of p38MAPK signaling, may therefore play a role in moderating wound healing. This Homo sapiens (Human) protein is Desmoglein-3.